The sequence spans 108 residues: Pyrimidine/purine nucleoside phosphorylase (108 aa).

The protein belongs to the nucleoside phosphorylase PpnP family.

It catalyses the reaction a purine D-ribonucleoside + phosphate = a purine nucleobase + alpha-D-ribose 1-phosphate. It carries out the reaction adenosine + phosphate = alpha-D-ribose 1-phosphate + adenine. The catalysed reaction is cytidine + phosphate = cytosine + alpha-D-ribose 1-phosphate. The enzyme catalyses guanosine + phosphate = alpha-D-ribose 1-phosphate + guanine. It catalyses the reaction inosine + phosphate = alpha-D-ribose 1-phosphate + hypoxanthine. It carries out the reaction thymidine + phosphate = 2-deoxy-alpha-D-ribose 1-phosphate + thymine. The catalysed reaction is uridine + phosphate = alpha-D-ribose 1-phosphate + uracil. The enzyme catalyses xanthosine + phosphate = alpha-D-ribose 1-phosphate + xanthine. Its function is as follows. Catalyzes the phosphorolysis of diverse nucleosides, yielding D-ribose 1-phosphate and the respective free bases. Can use uridine, adenosine, guanosine, cytidine, thymidine, inosine and xanthosine as substrates. Also catalyzes the reverse reactions. This is Pyrimidine/purine nucleoside phosphorylase from Polaromonas naphthalenivorans (strain CJ2).